A 337-amino-acid chain; its full sequence is Casein kinase I isoform alpha (337 aa).

Residues 17–285 form the Protein kinase domain; that stretch reads YKLVRKIGSG…YLRQLFRILF (269 aa). ATP is bound by residues 23 to 31 and Lys46; that span reads IGSGSFGDI. Asp136 serves as the catalytic Proton acceptor. The span at 309 to 325 shows a compositional bias: low complexity; it reads AASSSGQGQQAQTPTGK. Residues 309–337 are disordered; the sequence is AASSSGQGQQAQTPTGKQTDKSKSNMKGF.

This sequence belongs to the protein kinase superfamily. CK1 Ser/Thr protein kinase family. Casein kinase I subfamily. Post-translationally, autophosphorylated.

Its subcellular location is the cytoplasm. It localises to the cytoskeleton. The protein resides in the microtubule organizing center. The protein localises to the centrosome. It is found in the chromosome. Its subcellular location is the centromere. It localises to the kinetochore. The protein resides in the nucleus speckle. The protein localises to the cilium basal body. It is found in the spindle. It carries out the reaction L-seryl-[protein] + ATP = O-phospho-L-seryl-[protein] + ADP + H(+). It catalyses the reaction L-threonyl-[protein] + ATP = O-phospho-L-threonyl-[protein] + ADP + H(+). Casein kinases are operationally defined by their preferential utilization of acidic proteins such as caseins as substrates. It can phosphorylate a large number of proteins. Participates in Wnt signaling. May play a role in segregating chromosomes during mitosis. May play a role in keratin cytoskeleton disassembly. This Gallus gallus (Chicken) protein is Casein kinase I isoform alpha (CSNK1A1).